Consider the following 312-residue polypeptide: DNA-directed RNA polymerase subunit alpha (312 aa).

Positions 1 to 229 are alpha N-terminal domain (alpha-NTD); sequence MLQYQIDRIE…ELFQPLATVT (229 aa). The interval 246 to 312 is alpha C-terminal domain (alpha-CTD); that stretch reads IPLEELNLSV…ISIPQSRTSA (67 aa).

The protein belongs to the RNA polymerase alpha chain family. As to quaternary structure, in cyanobacteria the RNAP catalytic core is composed of 2 alpha, 1 beta, 1 beta', 1 gamma and 1 omega subunit. When a sigma factor is associated with the core the holoenzyme is formed, which can initiate transcription.

The enzyme catalyses RNA(n) + a ribonucleoside 5'-triphosphate = RNA(n+1) + diphosphate. In terms of biological role, DNA-dependent RNA polymerase catalyzes the transcription of DNA into RNA using the four ribonucleoside triphosphates as substrates. The protein is DNA-directed RNA polymerase subunit alpha of Prochlorococcus marinus (strain SARG / CCMP1375 / SS120).